We begin with the raw amino-acid sequence, 362 residues long: uncharacterized protein (362 aa).

Residues 314–323 show a composition bias toward basic and acidic residues; sequence GEEKEPKQES. The segment at 314 to 362 is disordered; that stretch reads GEEKEPKQESQEQLFNPFTIDEMLTEEQQQQQEEENNATEEEGDTVKLG. Positions 345–356 are enriched in acidic residues; sequence QEEENNATEEEG.

This is an uncharacterized protein from Acidianus two-tailed virus (ATV).